Here is a 458-residue protein sequence, read N- to C-terminus: MRVLSEYKGKAGELLREHGLSVGDRVRIVRDDGVVVEGIIMPRSELGDDEHIVVKMDNGYNVGVRVDRIEKLEAPGEGHEPSFKPMEGEIEYDPKLPNVSVMSTGGTIACRVDYETGAVKPAFTAEELVGAVPELLDVINIVDARAVLDLLSENMEPKHWMKIAEEVVDALSDPDVEGVVIGHGTDTMAFTAAALSFVIEGLNGPVVLVGAQRSSDRPSSDAASNLIAACAFAGDGEVGEVTVCMHGWTSDEVCLVHRGVRVRKMHTSRRDAFRSVESIPIAKVDVKDLRNPKIEFLRSDYRRPEDGEPEISGGFEEKVALVKFAPGMDPEVLDFYVDRGYRGIVLEGTGLGHVSEQWLESIERAVDDGIAVVMTSQCLYGRVNMNVYRTGRLLRAVGVIPGEDMLPEVAYVKLMYVLDRTDDIKEVERLMRTNIAGEIEGGRVLGGFEPADGPHHRL.

The 338-residue stretch at 97 to 434 folds into the Asparaginase/glutaminase domain; sequence PNVSVMSTGG…KEVERLMRTN (338 aa). Residues Thr-107, Thr-185, Asp-186, and Lys-264 contribute to the active site.

It belongs to the asparaginase 1 family. GatD subfamily. As to quaternary structure, heterodimer of GatD and GatE.

The enzyme catalyses L-glutamyl-tRNA(Gln) + L-glutamine + ATP + H2O = L-glutaminyl-tRNA(Gln) + L-glutamate + ADP + phosphate + H(+). Its function is as follows. Allows the formation of correctly charged Gln-tRNA(Gln) through the transamidation of misacylated Glu-tRNA(Gln) in organisms which lack glutaminyl-tRNA synthetase. The reaction takes place in the presence of glutamine and ATP through an activated gamma-phospho-Glu-tRNA(Gln). The GatDE system is specific for glutamate and does not act on aspartate. The chain is Glutamyl-tRNA(Gln) amidotransferase subunit D from Methanopyrus kandleri (strain AV19 / DSM 6324 / JCM 9639 / NBRC 100938).